Here is a 344-residue protein sequence, read N- to C-terminus: 4-dimethylallyltryptophan N-methyltransferase easF (344 aa).

The protein belongs to the methyltransferase superfamily. Homodimer.

The enzyme catalyses 4-(3-methylbut-2-enyl)-L-tryptophan + S-adenosyl-L-methionine = 4-(3-methylbut-2-enyl)-L-abrine + S-adenosyl-L-homocysteine + H(+). It functions in the pathway alkaloid biosynthesis; ergot alkaloid biosynthesis. In terms of biological role, 4-dimethylallyltryptophan N-methyltransferase; part of the gene cluster that mediates the biosynthesis of fungal ergot alkaloid ergovaline, the predominant ergopeptine product in E.festucae var. lolii. DmaW catalyzes the first step of ergot alkaloid biosynthesis by condensing dimethylallyl diphosphate (DMAP) and tryptophan to form 4-dimethylallyl-L-tryptophan. The second step is catalyzed by the methyltransferase easF that methylates 4-dimethylallyl-L-tryptophan in the presence of S-adenosyl-L-methionine, resulting in the formation of 4-dimethylallyl-L-abrine. The catalase easC and the FAD-dependent oxidoreductase easE then transform 4-dimethylallyl-L-abrine to chanoclavine-I which is further oxidized by easD in the presence of NAD(+), resulting in the formation of chanoclavine-I aldehyde. Agroclavine dehydrogenase easG then mediates the conversion of chanoclavine-I aldehyde to agroclavine via a non-enzymatic adduct reaction: the substrate is an iminium intermediate that is formed spontaneously from chanoclavine-I aldehyde in the presence of glutathione. The presence of easA is not required to complete this reaction. Further conversion of agroclavine to paspalic acid is a two-step process involving oxidation of agroclavine to elymoclavine and of elymoclavine to paspalic acid, the second step being performed by the elymoclavine oxidase cloA. Paspalic acid is then further converted to D-lysergic acid. Ergovaline is assembled from D-lysergic acid and three different amino acids by the D-lysergyl-peptide-synthetase composed of a monomudular (lpsB) and a trimodular (lpsA) nonribosomal peptide synthetase subunit. The chain is 4-dimethylallyltryptophan N-methyltransferase easF from Epichloe festucae var. lolii (Neotyphodium lolii).